A 475-amino-acid chain; its full sequence is 3-isopropylmalate dehydratase large subunit (475 aa).

Positions 347, 407, and 410 each coordinate [4Fe-4S] cluster. The segment at 418–442 (LAPGERSASTSNRNFEGRQGKGGRT) is disordered.

Belongs to the aconitase/IPM isomerase family. LeuC type 1 subfamily. As to quaternary structure, heterodimer of LeuC and LeuD. Requires [4Fe-4S] cluster as cofactor.

The enzyme catalyses (2R,3S)-3-isopropylmalate = (2S)-2-isopropylmalate. It functions in the pathway amino-acid biosynthesis; L-leucine biosynthesis; L-leucine from 3-methyl-2-oxobutanoate: step 2/4. Its function is as follows. Catalyzes the isomerization between 2-isopropylmalate and 3-isopropylmalate, via the formation of 2-isopropylmaleate. This Streptomyces griseus subsp. griseus (strain JCM 4626 / CBS 651.72 / NBRC 13350 / KCC S-0626 / ISP 5235) protein is 3-isopropylmalate dehydratase large subunit.